The primary structure comprises 183 residues: MSQKPAKEGPRLSKNQKYSEHFSIHCCPPFTFLNSKKEIVDRKYSICKSGCFYQKKEEDWICCACQKTRTSRRAKSPQRPKQQPAAPPAVVRAPAKPRSPPRSERQPRSPPRSERQPRSPPRSERQPRSPPRSERQPRPRPEVRPPPAKQRPPQKSKQQPRSSPLRGPGASRGGSPVKASRFW.

Residues Thr68–Trp183 are disordered. The span at Arg69 to Gln78 shows a compositional bias: basic residues. The segment covering Arg79–Lys96 has biased composition (low complexity). 4 repeat units span residues Pro97 to Gln106, Pro107 to Gln116, Pro117 to Gln126, and Pro127 to Gln136. Residues Pro97 to Gln136 form a 4 X 10 AA tandem repeats of P-R-S-P-P-R-S-E-R-Q region. Phosphoserine is present on residues Ser99 and Ser109. Positions Pro101–Val143 are enriched in basic and acidic residues. The span at Arg151–Pro164 shows a compositional bias: low complexity.

The protein resides in the cytoplasm. Its subcellular location is the perinuclear region. Functionally, may play a role in compacting or stabilizing the myelin sheath, possibly by binding the negatively charged acidic phospholipids of the cytoplasmic membrane. This Homo sapiens (Human) protein is Myelin-associated oligodendrocyte basic protein (MOBP).